The following is a 151-amino-acid chain: Peptide deformylase (151 aa).

Fe cation contacts are provided by Cys88 and His130. Glu131 is a catalytic residue. His134 is a binding site for Fe cation.

This sequence belongs to the polypeptide deformylase family. Fe(2+) is required as a cofactor.

It catalyses the reaction N-terminal N-formyl-L-methionyl-[peptide] + H2O = N-terminal L-methionyl-[peptide] + formate. Functionally, removes the formyl group from the N-terminal Met of newly synthesized proteins. Requires at least a dipeptide for an efficient rate of reaction. N-terminal L-methionine is a prerequisite for activity but the enzyme has broad specificity at other positions. This chain is Peptide deformylase, found in Heliobacterium modesticaldum (strain ATCC 51547 / Ice1).